A 425-amino-acid chain; its full sequence is Serine hydroxymethyltransferase (425 aa).

132-134 (GHL) contributes to the (6S)-5,6,7,8-tetrahydrofolate binding site. N6-(pyridoxal phosphate)lysine is present on Lys-237.

This sequence belongs to the SHMT family. Homodimer. Requires pyridoxal 5'-phosphate as cofactor.

The protein resides in the cytoplasm. The catalysed reaction is (6R)-5,10-methylene-5,6,7,8-tetrahydrofolate + glycine + H2O = (6S)-5,6,7,8-tetrahydrofolate + L-serine. Its pathway is one-carbon metabolism; tetrahydrofolate interconversion. The protein operates within amino-acid biosynthesis; glycine biosynthesis; glycine from L-serine: step 1/1. Catalyzes the reversible interconversion of serine and glycine with tetrahydrofolate (THF) serving as the one-carbon carrier. This reaction serves as the major source of one-carbon groups required for the biosynthesis of purines, thymidylate, methionine, and other important biomolecules. Also exhibits THF-independent aldolase activity toward beta-hydroxyamino acids, producing glycine and aldehydes, via a retro-aldol mechanism. The sequence is that of Serine hydroxymethyltransferase from Wolbachia sp. subsp. Brugia malayi (strain TRS).